The sequence spans 342 residues: Ribosomal RNA small subunit methyltransferase H (342 aa).

S-adenosyl-L-methionine contacts are provided by residues 36–38 (GGH), Asp-56, Phe-82, Asp-100, and Gln-107. The tract at residues 311 to 342 (GESGMGKGNSAAASRFPTADSPFPASANGDAA) is disordered.

It belongs to the methyltransferase superfamily. RsmH family.

The protein localises to the cytoplasm. It catalyses the reaction cytidine(1402) in 16S rRNA + S-adenosyl-L-methionine = N(4)-methylcytidine(1402) in 16S rRNA + S-adenosyl-L-homocysteine + H(+). Specifically methylates the N4 position of cytidine in position 1402 (C1402) of 16S rRNA. This Xanthomonas axonopodis pv. citri (strain 306) protein is Ribosomal RNA small subunit methyltransferase H.